The chain runs to 305 residues: MDFVKQFLYSCDHMGFLALTQETWQNRWFPSQISLTSDVACLQSLNPRDLEFYKFLFSFLAMAEKLVNFNIQALVADFHSHDLEHYYTEQEAMENIHGKVYANILNMFFKNNVGEMQKYAREIVGDEALAAKLHWLHGRVSEAKTRAEKVLVFLLIEGIFFISSFYSIATLRVRGLMNGVCMANDYISRDEWVHTRAAALLFNTLVPDEEKPSPEWIGALFREAVEVEYNFILAKGRGVSHVNVADINRFLEATADRILKSINVGPVYGTQPPPNCPLVYTGCLKNVNFFERESSDYTTAVDNDL.

Fe cation contacts are provided by Glu-64, Glu-94, and His-97. The active site involves Tyr-101. A helical membrane pass occupies residues 150-170 (VLVFLLIEGIFFISSFYSIAT). Positions 157, 191, and 194 each coordinate Fe cation.

The protein belongs to the ribonucleoside diphosphate reductase small chain family. Heterotetramer composed of a homodimer of the large subunit (R1) and a homodimer of the small subunit (R2). Larger multisubunit protein complex are also active, composed of (R1)n(R2)n. Fe cation serves as cofactor.

It is found in the host membrane. The enzyme catalyses a 2'-deoxyribonucleoside 5'-diphosphate + [thioredoxin]-disulfide + H2O = a ribonucleoside 5'-diphosphate + [thioredoxin]-dithiol. In terms of biological role, ribonucleoside-diphosphate reductase holoenzyme provides the precursors necessary for viral DNA synthesis. Allows virus growth in non-dividing cells, as well as reactivation from latency in infected hosts. Catalyzes the biosynthesis of deoxyribonucleotides from the corresponding ribonucleotides. The chain is Ribonucleoside-diphosphate reductase small subunit from Equus caballus (Horse).